The sequence spans 1725 residues: Latrophilin Cirl (1725 aa).

At methionine 1–arginine 757 the chain is on the extracellular side. The region spanning alanine 18–isoleucine 107 is the SUEL-type lectin domain. Residue asparagine 135 is glycosylated (N-linked (GlcNAc...) asparagine). A disordered region spans residues alanine 164–glycine 284. 2 stretches are compositionally biased toward low complexity: residues proline 167–threonine 176 and serine 224–asparagine 236. N-linked (GlcNAc...) asparagine glycans are attached at residues asparagine 236, asparagine 278, asparagine 326, asparagine 388, asparagine 645, asparagine 693, and asparagine 720. Polar residues predominate over residues leucine 259–asparagine 282. Positions aspartate 361–serine 390 are disordered. Positions alanine 371–serine 390 are enriched in polar residues. Residues arginine 551–histidine 744 form the GAIN-B domain. Disulfide bonds link cysteine 699–cysteine 726 and cysteine 714–cysteine 728. A GPS region spans residues cysteine 699 to histidine 744. Residues isoleucine 758–leucine 778 form a helical membrane-spanning segment. At lysine 779 to threonine 791 the chain is on the cytoplasmic side. The helical transmembrane segment at serine 792–isoleucine 812 threads the bilayer. The Extracellular portion of the chain corresponds to glutamate 813 to serine 818. The chain crosses the membrane as a helical span at residues isoleucine 819–phenylalanine 839. At cysteine 840–valine 865 the chain is on the cytoplasmic side. The chain crosses the membrane as a helical span at residues asparagine 866–isoleucine 886. Residues aspartate 887–phenylalanine 910 lie on the Extracellular side of the membrane. A helical transmembrane segment spans residues valine 911–isoleucine 931. At methionine 932–serine 958 the chain is on the cytoplasmic side. The chain crosses the membrane as a helical span at residues phenylalanine 959–alanine 979. Residues lysine 980 to alanine 986 are Extracellular-facing. A helical transmembrane segment spans residues proline 987–phenylalanine 1007. Residues histidine 1008–lysine 1725 lie on the Cytoplasmic side of the membrane. Residues threonine 1056–glutamine 1088 form a disordered region. Serine 1153 carries the post-translational modification Phosphoserine. Disordered stretches follow at residues histidine 1236–arginine 1263, glutamine 1309–histidine 1337, glycine 1472–arginine 1555, and leucine 1636–histidine 1705. Residues asparagine 1237–glycine 1246 are compositionally biased toward basic residues. Residues serine 1255 and serine 1262 each carry the phosphoserine modification. A compositionally biased stretch (low complexity) spans glutamine 1309–leucine 1327. 2 positions are modified to phosphoserine: serine 1328 and serine 1329. The span at glycine 1478 to lysine 1496 shows a compositional bias: low complexity. Composition is skewed to acidic residues over residues aspartate 1505–threonine 1522 and cysteine 1532–aspartate 1543. The segment covering glutamine 1651–glutamine 1666 has biased composition (polar residues). Positions serine 1667–alanine 1683 are enriched in low complexity. The span at proline 1684 to threonine 1693 shows a compositional bias: basic residues. The segment covering glutamine 1694–histidine 1705 has biased composition (low complexity).

Belongs to the G-protein coupled receptor 2 family. LN-TM7 subfamily. Forms a heterodimer, consisting of a large extracellular region non-covalently linked to a seven-transmembrane moiety. Proteolytically cleaved into 2 subunits, an extracellular subunit and a seven-transmembrane subunit.

It localises to the cell membrane. The chain is Latrophilin Cirl from Drosophila mojavensis (Fruit fly).